Consider the following 106-residue polypeptide: Replication restart protein PriB (106 aa).

Residues 4–103 enclose the SSB domain; that stretch reads VNRLVLSGTV…LHAEQIELID (100 aa).

This sequence belongs to the PriB family. In terms of assembly, homodimer. Interacts with PriA and DnaT. Component of the replication restart primosome. Primosome assembly occurs via a 'hand-off' mechanism. PriA binds to replication forks, subsequently PriB then DnaT bind; DnaT then displaces ssDNA to generate the helicase loading substrate.

Functionally, involved in the restart of stalled replication forks, which reloads the replicative helicase on sites other than the origin of replication; the PriA-PriB pathway is the major replication restart pathway. During primosome assembly it facilitates complex formation between PriA and DnaT on DNA; stabilizes PriA on DNA. Stimulates the DNA unwinding activity of PriA helicase. The protein is Replication restart protein PriB of Pectobacterium carotovorum subsp. carotovorum (strain PC1).